An 87-amino-acid polypeptide reads, in one-letter code: Small ribosomal subunit protein uS19 (87 aa).

It belongs to the universal ribosomal protein uS19 family.

In terms of biological role, protein S19 forms a complex with S13 that binds strongly to the 16S ribosomal RNA. In Mycoplasma genitalium (strain ATCC 33530 / DSM 19775 / NCTC 10195 / G37) (Mycoplasmoides genitalium), this protein is Small ribosomal subunit protein uS19 (rpsS).